The chain runs to 681 residues: Envelope glycoprotein (681 aa).

A signal peptide spans 1 to 18 (MKTTCLFISLILIQGIKT). Residues 19 to 648 (LPILEIASNN…GLGGKWWTSD (630 aa)) are Extracellular-facing. The segment at 38–188 (SGTLQKTEDV…FSRQGQGYRH (151 aa)) is receptor-binding. 8 N-linked (GlcNAc...) asparagine; by host glycosylation sites follow: Asn94, Asn171, Asn190, Asn202, Asn207, Asn219, Asn223, and Asn255. The tract at residues 223–351 (NQTCAPSKIP…STNNTSKNNF (129 aa)) is disordered. Residues 244–259 (PTSTPTDATTLNTTDP) are compositionally biased toward low complexity. Residues 277–455 (EPYTTSDAVT…PFLDGLINAP (179 aa)) form a mucin-like region region. Composition is skewed to polar residues over residues 278–290 (PYTT…KQGL) and 308–341 (EGNN…TTAI). 12 N-linked (GlcNAc...) asparagine; by host glycosylation sites follow: Asn310, Asn323, Asn326, Asn337, Asn344, Asn345, Asn350, Asn360, Asn389, Asn397, Asn408, and Asn487. Low complexity predominate over residues 342–351 (STNNTSKNNF). The segment covering 366–414 (TQSTATENEQTSAPSKTTLPPTGNLTTAKSTNNTKGPTTTAPNMTNGHL) has biased composition (polar residues). The tract at residues 366 to 425 (TQSTATENEQTSAPSKTTLPPTGNLTTAKSTNNTKGPTTTAPNMTNGHLTSPSPTPNPTT) is disordered. Residues 529–549 (GLSWIPFFGPGIEGLYTAGLI) are fusion peptide. N-linked (GlcNAc...) asparagine; by host glycosylation is found at Asn564 and Asn619. Residues 649-669 (WGVLTNLGILLLLSIAVLIAL) traverse the membrane as a helical segment. Over 670–681 (SCICRIFTKYIG) the chain is Cytoplasmic. Residues Cys671 and Cys673 are each lipidated (S-palmitoyl cysteine; by host).

Belongs to the filoviruses glycoprotein family. As to quaternary structure, homotrimer; each monomer consists of a GP1 and a GP2 subunit linked by disulfide bonds. The resulting peplomers (GP1,2) protrude from the virus surface as spikes. GP1,2 interacts with human CD209 and CLEC4M (collectively referred to as DC-SIGN(R)). Asialoglycoprotein receptor (ASGP-R) may be a liver-specific receptor for GP1,2. Members of the Tyro3 receptor tyrosine kinase family may be cell entry factors interacting with GP1,2. N-glycosylated. Post-translationally, O-glycosylated in the mucin-like region. In terms of processing, specific enzymatic cleavages in vivo yield mature proteins. The precursor is processed into GP1 and GP2 by host cell furin in the trans Golgi, and maybe by other host proteases, to yield the mature GP1 and GP2 proteins. The cleavage site corresponds to the furin optimal cleavage sequence [KR]-X-[KR]-R. GP1 is phosphorylated on serine residues between residues 260 and 273.

The protein localises to the virion membrane. It localises to the host cell membrane. In terms of biological role, GP1 is responsible for binding to the receptor(s) on target cells. Interacts with CD209/DC-SIGN and CLEC4M/DC-SIGNR which act as cofactors for virus entry into the host cell. Binding to CD209 and CLEC4M, which are respectively found on dendritic cells (DCs), and on endothelial cells of liver sinusoids and lymph node sinuses, facilitate infection of macrophages and endothelial cells. These interactions not only facilitate virus cell entry, but also allow capture of viral particles by DCs and subsequent transmission to susceptible cells without DCs infection (trans infection). GP2 acts as a class I viral fusion protein. Under the current model, the protein has at least 3 conformational states: pre-fusion native state, pre-hairpin intermediate state, and post-fusion hairpin state. During viral and target cell membrane fusion, the coiled coil regions (heptad repeats) assume a trimer-of-hairpins structure, positioning the fusion peptide in close proximity to the C-terminal region of the ectodomain. The formation of this structure appears to drive apposition and subsequent fusion of viral and target cell membranes. Responsible for penetration of the virus into the cell cytoplasm by mediating the fusion of the membrane of the endocytosed virus particle with the endosomal membrane. Low pH in endosomes induces an irreversible conformational change in GP2, releasing the fusion hydrophobic peptide. This chain is Envelope glycoprotein (GP), found in Lake Victoria marburgvirus (strain Popp-67) (MARV).